A 1557-amino-acid chain; its full sequence is DVA-1 polyprotein (1557 aa).

The first 21 residues, 1 to 21 (MKSTSFITLLLLSYFIVEAHS), serve as a signal peptide directing secretion. Residues 22–60 (SIFHWDDERLFKHDDTHSWLTDVQKAELETLKHQPIQLR) constitute a propeptide that is removed on maturation. Asn-997 carries N-linked (GlcNAc...) asparagine glycosylation.

It belongs to the NPA family. Nematode polyprotein allergens (NPAs) are synthesized as large polypeptides that are subsequently proteolytically cleaved to active polypeptide units.

Functionally, has high binding affinity for fatty acids and retinoids. The sequence is that of DVA-1 polyprotein (DVA-1) from Dictyocaulus viviparus (Bovine lungworm).